The primary structure comprises 901 residues: Protein translocase subunit SecA (901 aa).

ATP-binding positions include Q87, 105–109 (GEGKT), and D512. The segment at 852 to 901 (AQMQQLSHQSDDEAAAEDLAAQTGERKVGRNDPCPCGSGKKYKQCHGRLS) is disordered. C885, C887, C896, and H897 together coordinate Zn(2+). The segment covering 891–901 (KKYKQCHGRLS) has biased composition (basic residues).

The protein belongs to the SecA family. In terms of assembly, monomer and homodimer. Part of the essential Sec protein translocation apparatus which comprises SecA, SecYEG and auxiliary proteins SecDF-YajC and YidC. Requires Zn(2+) as cofactor.

It localises to the cell inner membrane. Its subcellular location is the cytoplasm. It catalyses the reaction ATP + H2O + cellular proteinSide 1 = ADP + phosphate + cellular proteinSide 2.. In terms of biological role, part of the Sec protein translocase complex. Interacts with the SecYEG preprotein conducting channel. Has a central role in coupling the hydrolysis of ATP to the transfer of proteins into and across the cell membrane, serving both as a receptor for the preprotein-SecB complex and as an ATP-driven molecular motor driving the stepwise translocation of polypeptide chains across the membrane. In Klebsiella pneumoniae (strain 342), this protein is Protein translocase subunit SecA.